The primary structure comprises 670 residues: ATP-dependent DNA helicase Rep (670 aa).

Positions 1–277 (MLFNEHQKKA…IIMQHNYRSS (277 aa)) constitute a UvrD-like helicase ATP-binding domain. ATP contacts are provided by residues 22–29 (AGAGSGKT) and Arg275. The UvrD-like helicase C-terminal domain maps to 278–562 (GRILKVANAL…QLMTLHASKG (285 aa)).

This sequence belongs to the helicase family. UvrD subfamily. As to quaternary structure, homodimer.

The enzyme catalyses Couples ATP hydrolysis with the unwinding of duplex DNA by translocating in the 3'-5' direction.. It carries out the reaction ATP + H2O = ADP + phosphate + H(+). In terms of biological role, rep helicase is a single-stranded DNA-dependent ATPase involved in DNA replication; it can initiate unwinding at a nick in the DNA. It binds to the single-stranded DNA and acts in a progressive fashion along the DNA in the 3' to 5' direction. The sequence is that of ATP-dependent DNA helicase Rep from Buchnera aphidicola subsp. Baizongia pistaciae (strain Bp).